Consider the following 143-residue polypeptide: Large ribosomal subunit protein bL17 (143 aa).

Belongs to the bacterial ribosomal protein bL17 family. In terms of assembly, part of the 50S ribosomal subunit. Contacts protein L32.

In Bartonella quintana (strain Toulouse) (Rochalimaea quintana), this protein is Large ribosomal subunit protein bL17.